Here is a 712-residue protein sequence, read N- to C-terminus: MSQEKQVFSIDLAGRQLTVETGQLAKQANGAVLVRYGDTAVLSTATASKEAKNVDFFPLTVNYEERLYAVGKIPGGFIKREGRPSEKAILASRLIDRPIRPLFADGFRNEVQVVSIVMSVDQDCSSEMAAMLGSSLALSISDIPFEGPIAGATVGRINGEFVINPTVEQQEQSDIHLVVAGTKDAINMVEAGADQVPEETMLEAIMFGHDEIKRLIAFQEEIVQAVGKEKSEVKLYEVDADLNQAVREMAEKDMHSAIQVHEKHAREDAINEVKKRVIEHYEAQEADADTLGQVNEILYKIVKEEVRRLITVEKIRPDGRKGDEIRPLASEVGILSRTHGSGLFTRGQTQALSICTLGALGDVQILDGLGVEESKRFMHHYNFPSFSVGETRPMRGPGRREIGHGALGERALEPVIPSEKDFPYTVRLVSEVLESNGSTSQASICGSTLAMMDAGVPLKAPVAGIAMGLVKTGEHYTILSDIQGMEDHLGDMDFKVAGTAHGVTALQMDIKIDGLSREILEEALQQAKVGRVHILNHMLSVIAEPRTELSAYAPKIITMTINPDKIRDVIGPSGKQINKIIEETGVKIDIEQDGTVFISSINQEMNDKAKKIIEDIVREVQVGEIYEGKVKRVEKFGAFVELFSGKDGLVHISELALERVGKVEDVVKIGDVITVKVIEIDKQGRVNLSRKVLLKEEQEKEAAKEENKQEQQ.

Residues D487 and D493 each contribute to the Mg(2+) site. The KH domain maps to 554–613 (PKIITMTINPDKIRDVIGPSGKQINKIIEETGVKIDIEQDGTVFISSINQEMNDKAKKII). Positions 623 to 691 (GEIYEGKVKR…KQGRVNLSRK (69 aa)) constitute an S1 motif domain.

This sequence belongs to the polyribonucleotide nucleotidyltransferase family. The cofactor is Mg(2+).

It is found in the cytoplasm. It catalyses the reaction RNA(n+1) + phosphate = RNA(n) + a ribonucleoside 5'-diphosphate. Its function is as follows. Involved in mRNA degradation. Catalyzes the phosphorolysis of single-stranded polyribonucleotides processively in the 3'- to 5'-direction. The protein is Polyribonucleotide nucleotidyltransferase of Bacillus anthracis (strain CDC 684 / NRRL 3495).